The following is a 381-amino-acid chain: Peptidoglycan transport system permease protein YejE (381 aa).

Transmembrane regions (helical) follow at residues 38–58, 183–203, 230–250, 292–312, and 347–367; these read YWSF…EFIA, VLFG…AGAI, ILLI…GIML, LLPN…SGSI, and WLGL…IFVG. An ABC transmembrane type-1 domain is found at 179 to 371; that stretch reads FRISVLFGLT…LLIFVGEAVR (193 aa).

It belongs to the binding-protein-dependent transport system permease family. The complex is composed of one ATP-binding protein (YejF), two transmembrane proteins (YejB and YejE) and a solute-binding protein (YepA or YejA).

It localises to the cell inner membrane. In terms of biological role, part of the ABC transporter complex YejBEF-YepA involved in the uptake of muropeptides, the breakdown products of cell wall peptidoglycan. The import of muropeptides into the cell enables peptidoglycan recycling, which is vital for cell wall integrity in this bacterium. Is also probably part of the ABC transporter complex YejABEF, which is likely involved in broad-spectrum peptide import. Responsible for the translocation of the substrate across the membrane. This is Peptidoglycan transport system permease protein YejE from Agrobacterium fabrum (strain C58 / ATCC 33970) (Agrobacterium tumefaciens (strain C58)).